The sequence spans 486 residues: Malonate-semialdehyde dehydrogenase 1 (486 aa).

5 residues coordinate NAD(+): Phe154, Lys178, Glu181, Arg182, and Ser231. Cys286 serves as the catalytic Nucleophile. Glu386 contributes to the NAD(+) binding site.

Belongs to the aldehyde dehydrogenase family. IolA subfamily. As to quaternary structure, homotetramer.

The catalysed reaction is 3-oxopropanoate + NAD(+) + CoA + H2O = hydrogencarbonate + acetyl-CoA + NADH + H(+). The enzyme catalyses 2-methyl-3-oxopropanoate + NAD(+) + CoA + H2O = propanoyl-CoA + hydrogencarbonate + NADH + H(+). It participates in polyol metabolism; myo-inositol degradation into acetyl-CoA; acetyl-CoA from myo-inositol: step 7/7. Functionally, catalyzes the oxidation of malonate semialdehyde (MSA) and methylmalonate semialdehyde (MMSA) into acetyl-CoA and propanoyl-CoA, respectively. Is involved in a myo-inositol catabolic pathway. Bicarbonate, and not CO2, is the end-product of the enzymatic reaction. This is Malonate-semialdehyde dehydrogenase 1 from Bacillus thuringiensis (strain Al Hakam).